Consider the following 303-residue polypeptide: MMQDLRLILIIVGAIAIIALLLHGLWTSRKERSSLFRDRPVKRHKHDRQNSFVDDSDDEAFDNQQKPYAHKQVKSHQEYKAEPAIERRQQKLTEIDAATPEESDDPLLTGRQPETTARRAAIEEQEPQLGLFEFEEQNESERNGSAIEEKSQEAAGEKEAQTKVKEIVLVLHVAAHHGQELNGESLLQSILQSGFQFGEMQIFHRHVNPSGSGPVLFSLANMVKPGSFNPETMVDFTTPGVSIFMMVPSYGESSQNFKLMLQAAQRIASDVGGVVLDDERKMLTPQKIELYKARIRSTLGVQV.

Over 1-6 (MMQDLR) the chain is Periplasmic. A helical transmembrane segment spans residues 7-27 (LILIIVGAIAIIALLLHGLWT). Residues 28–303 (SRKERSSLFR…RIRSTLGVQV (276 aa)) lie on the Cytoplasmic side of the membrane. 3 disordered regions span residues 39 to 61 (RPVK…DEAF), 66 to 85 (KPYA…EPAI), and 124 to 159 (EQEP…GEKE). Composition is skewed to basic and acidic residues over residues 75 to 85 (SHQEYKAEPAI) and 139 to 159 (ESER…GEKE).

This sequence belongs to the ZipA family. In terms of assembly, interacts with FtsZ via their C-terminal domains.

It localises to the cell inner membrane. Essential cell division protein that stabilizes the FtsZ protofilaments by cross-linking them and that serves as a cytoplasmic membrane anchor for the Z ring. Also required for the recruitment to the septal ring of downstream cell division proteins. The protein is Cell division protein ZipA of Photorhabdus laumondii subsp. laumondii (strain DSM 15139 / CIP 105565 / TT01) (Photorhabdus luminescens subsp. laumondii).